The sequence spans 193 residues: Adenine phosphoribosyltransferase (193 aa).

Belongs to the purine/pyrimidine phosphoribosyltransferase family. Homodimer.

The protein resides in the cytoplasm. It catalyses the reaction AMP + diphosphate = 5-phospho-alpha-D-ribose 1-diphosphate + adenine. It functions in the pathway purine metabolism; AMP biosynthesis via salvage pathway; AMP from adenine: step 1/1. Functionally, catalyzes a salvage reaction resulting in the formation of AMP, that is energically less costly than de novo synthesis. This chain is Adenine phosphoribosyltransferase, found in Bifidobacterium adolescentis (strain ATCC 15703 / DSM 20083 / NCTC 11814 / E194a).